Consider the following 301-residue polypeptide: Glycine--tRNA ligase alpha subunit (301 aa).

The protein belongs to the class-II aminoacyl-tRNA synthetase family. As to quaternary structure, tetramer of two alpha and two beta subunits.

It localises to the cytoplasm. It carries out the reaction tRNA(Gly) + glycine + ATP = glycyl-tRNA(Gly) + AMP + diphosphate. The polypeptide is Glycine--tRNA ligase alpha subunit (Pseudoalteromonas atlantica (strain T6c / ATCC BAA-1087)).